A 310-amino-acid chain; its full sequence is Uracil phosphoribosyltransferase homolog (310 aa).

Disordered stretches follow at residues 1–27 (MASE…PSPE) and 62–89 (SERD…GNYD). Polar residues predominate over residues 16–25 (RQVNSTSSPS). The residue at position 25 (Ser-25) is a Phosphoserine. GTP contacts are provided by residues Arg-134, Arg-143, and 177-180 (EKGN). Arg-187 is a 5-phospho-alpha-D-ribose 1-diphosphate binding site. 2 residues coordinate GTP: Arg-204 and Arg-233. Residue 239–247 (YPILSTGNT) participates in 5-phospho-alpha-D-ribose 1-diphosphate binding. 300–302 (THF) lines the uracil pocket.

Belongs to the UPRTase family.

Its subcellular location is the cytoplasm. It is found in the nucleus. This is Uracil phosphoribosyltransferase homolog (Uprt) from Mus musculus (Mouse).